Reading from the N-terminus, the 550-residue chain is Hydroxylamine reductase (550 aa).

Residues cysteine 3, cysteine 6, cysteine 18, and cysteine 25 each contribute to the [2Fe-2S] cluster site. The hybrid [4Fe-2O-2S] cluster site is built by histidine 249, glutamate 273, cysteine 317, cysteine 405, cysteine 433, cysteine 458, glutamate 492, and lysine 494. Cysteine 405 carries the post-translational modification Cysteine persulfide.

It belongs to the HCP family. It depends on [2Fe-2S] cluster as a cofactor. Hybrid [4Fe-2O-2S] cluster serves as cofactor.

Its subcellular location is the cytoplasm. It catalyses the reaction A + NH4(+) + H2O = hydroxylamine + AH2 + H(+). Its function is as follows. Catalyzes the reduction of hydroxylamine to form NH(3) and H(2)O. The polypeptide is Hydroxylamine reductase (Yersinia pseudotuberculosis serotype O:1b (strain IP 31758)).